A 404-amino-acid chain; its full sequence is Serine/threonine transporter SstT (404 aa).

8 helical membrane-spanning segments follow: residues 17 to 37 (IGIG…LTGF), 39 to 59 (ILGK…VFAL), 75 to 95 (MTLI…VAVL), 138 to 158 (ALAT…GLAL), 179 to 199 (IVVW…FTTI), 212 to 232 (FLIL…NPLI), 287 to 307 (IPLG…VLTL), and 313 to 333 (FGIP…AVSA).

This sequence belongs to the dicarboxylate/amino acid:cation symporter (DAACS) (TC 2.A.23) family.

Its subcellular location is the cell membrane. It carries out the reaction L-serine(in) + Na(+)(in) = L-serine(out) + Na(+)(out). The catalysed reaction is L-threonine(in) + Na(+)(in) = L-threonine(out) + Na(+)(out). In terms of biological role, involved in the import of serine and threonine into the cell, with the concomitant import of sodium (symport system). The sequence is that of Serine/threonine transporter SstT from Streptococcus pyogenes serotype M1.